The primary structure comprises 295 residues: UDP-N-acetylenolpyruvoylglucosamine reductase (295 aa).

One can recognise an FAD-binding PCMH-type domain in the interval 23-188 (KVGGPADFLA…ISAKFALKPG (166 aa)). The active site involves Arg-167. The Proton donor role is filled by Ser-217. Residue Glu-287 is part of the active site.

Belongs to the MurB family. It depends on FAD as a cofactor.

It is found in the cytoplasm. It carries out the reaction UDP-N-acetyl-alpha-D-muramate + NADP(+) = UDP-N-acetyl-3-O-(1-carboxyvinyl)-alpha-D-glucosamine + NADPH + H(+). It functions in the pathway cell wall biogenesis; peptidoglycan biosynthesis. In terms of biological role, cell wall formation. This is UDP-N-acetylenolpyruvoylglucosamine reductase from Streptococcus pyogenes serotype M1.